Here is a 559-residue protein sequence, read N- to C-terminus: uncharacterized protein (559 aa).

Residues 1–10 (MSGRRGDHPG) are compositionally biased toward basic and acidic residues. The tract at residues 1–76 (MSGRRGDHPG…ERSRVPPRTT (76 aa)) is disordered. The next 11 membrane-spanning stretches (helical) occupy residues 128-148 (FAVD…AAAS), 155-175 (VALY…LIGP), 186-206 (VALA…IMNY), 208-228 (GATG…MMVF), 259-279 (VFGL…VEFV), 283-303 (LFQL…GASL), 358-378 (LWGN…PAFV), 387-407 (WVQL…NFAG), 428-448 (VLVT…ATAI), 490-510 (LAWV…WVGF), and 515-535 (ALLI…SLIP).

This sequence to M.leprae ML2143.

It is found in the cell membrane. This is an uncharacterized protein from Mycobacterium tuberculosis (strain CDC 1551 / Oshkosh).